The sequence spans 188 residues: dCTP deaminase (188 aa).

DCTP contacts are provided by residues 111 to 116, 135 to 137, Q156, Y170, and Q180; these read KSTYAR and TLE. The active-site Proton donor/acceptor is the E137.

It belongs to the dCTP deaminase family. Homotrimer.

It carries out the reaction dCTP + H2O + H(+) = dUTP + NH4(+). It functions in the pathway pyrimidine metabolism; dUMP biosynthesis; dUMP from dCTP (dUTP route): step 1/2. Functionally, catalyzes the deamination of dCTP to dUTP. The chain is dCTP deaminase from Nitrosomonas eutropha (strain DSM 101675 / C91 / Nm57).